We begin with the raw amino-acid sequence, 1267 residues long: BOS complex subunit NOMO2 (1267 aa).

Positions 1-31 are cleaved as a signal peptide; that stretch reads MLVGQGAGLLGPAVVTAAVVLLLSGVGPAHG. The Lumenal segment spans residues 32 to 1155; sequence SEDIVVGCGG…NPTRKLPEQD (1124 aa). Asparagine 50, asparagine 218, and asparagine 618 each carry an N-linked (GlcNAc...) asparagine glycan. The helical transmembrane segment at 1156–1176 threads the bilayer; it reads IAQGSYIALPLTLLVLLAGYN. Residues 1177-1267 lie on the Cytoplasmic side of the membrane; the sequence is HDKLIPLLLQ…LETTATCIHY (91 aa). The disordered stretch occupies residues 1198-1219; the sequence is GQAASDNSGPEDAKRQAKKQKT.

As to quaternary structure, component of the back of Sec61 (BOS) complex, composed of NCLN/Nicalin, NOMO (NOMO1, NOMO2 or NOMO3) and TMEM147. The BOS complex is part of the multi-pass translocon (MPT) complex, composed of three subcomplexes, the GEL complex (composed of RAB5IF/OPTI and TMCO1), the BOS complex (composed of NCLN/Nicalin, NOMO and TMEM147) and the PAT complex (composed of WDR83OS/Asterix and CCDC47). The MPT complex associates with the SEC61 complex. Due to the strong similarity between NOMO1, NOMO2 and NOMO3, similar interaction pattern probably occur for the three gene copies. Highly expressed in pancreas and skeletal muscle and, at lower levels, in heart.

The protein resides in the endoplasmic reticulum membrane. Its function is as follows. Component of the multi-pass translocon (MPT) complex that mediates insertion of multi-pass membrane proteins into the lipid bilayer of membranes. The MPT complex takes over after the SEC61 complex: following membrane insertion of the first few transmembrane segments of proteins by the SEC61 complex, the MPT complex occludes the lateral gate of the SEC61 complex to promote insertion of subsequent transmembrane regions. In Homo sapiens (Human), this protein is BOS complex subunit NOMO2 (NOMO2).